The following is a 582-amino-acid chain: Aspartate--tRNA ligase (582 aa).

Glu-174 contributes to the L-aspartate binding site. Residues 198-201 (QITK) form an aspartate region. Arg-220 serves as a coordination point for L-aspartate. Residues 220-222 (RDE) and Gln-229 each bind ATP. An L-aspartate-binding site is contributed by His-443. Glu-477 provides a ligand contact to ATP. Residue Arg-484 participates in L-aspartate binding. Residue 529-532 (GLDR) coordinates ATP.

It belongs to the class-II aminoacyl-tRNA synthetase family. Type 1 subfamily. In terms of assembly, homodimer.

The protein localises to the cytoplasm. It catalyses the reaction tRNA(Asp) + L-aspartate + ATP = L-aspartyl-tRNA(Asp) + AMP + diphosphate. Catalyzes the attachment of L-aspartate to tRNA(Asp) in a two-step reaction: L-aspartate is first activated by ATP to form Asp-AMP and then transferred to the acceptor end of tRNA(Asp). The chain is Aspartate--tRNA ligase from Streptococcus pyogenes serotype M6 (strain ATCC BAA-946 / MGAS10394).